A 452-amino-acid chain; its full sequence is Sulfide:quinone oxidoreductase, mitochondrial (452 aa).

Residues 54–55 (AG), Glu-77, Gln-85, and Val-120 contribute to the FAD site. Residue Cys-204 is the Cysteine persulfide intermediate of the active site. Cys-204 and Cys-380 are joined by a disulfide. FAD contacts are provided by residues Asp-337 and 345 to 348 (KTAA). The active-site Cysteine persulfide intermediate is Cys-380.

It belongs to the SQRD family. FAD is required as a cofactor.

The protein localises to the mitochondrion. The enzyme catalyses ubiquinone-10 + hydrogen sulfide + sulfite + 2 H(+) = ubiquinol-10 + thiosulfate. It catalyses the reaction a quinone + hydrogen sulfide + glutathione + H(+) = S-sulfanylglutathione + a quinol. Its function is as follows. Catalyzes the oxidation of hydrogen sulfide, with the help of a quinone. The sequence is that of Sulfide:quinone oxidoreductase, mitochondrial from Dictyostelium discoideum (Social amoeba).